Consider the following 941-residue polypeptide: HMG box transcription factor BBX (941 aa).

Residues 1–18 (MKGSNRNKDHSAEGEGVG) show a composition bias toward basic and acidic residues. Disordered stretches follow at residues 1–21 (MKGSNRNKDHSAEGEGVGKRP), 39–80 (FSEE…EQRA), 157–200 (VKSP…FGMA), and 221–242 (TPEVSSGTCRPDVSESPELRQK). Composition is skewed to acidic residues over residues 39–52 (FSEEEEEEDEEEDI) and 63–75 (LEQDVGETEDDES). Residues 80-148 (ARRPMNAFLL…AFMKANPGYK (69 aa)) constitute a DNA-binding region (HMG box). Residues 177-191 (SSRDLPSPKKAKTEE) are compositionally biased toward basic and acidic residues. Ser243 carries the post-translational modification Phosphoserine. Residues 326 to 370 (GRIKELEKGKEEKEIKMEKTDETRLQKEAEFEKSAKENLRDSKEL) adopt a coiled-coil conformation. Lys385 participates in a covalent cross-link: Glycyl lysine isopeptide (Lys-Gly) (interchain with G-Cter in SUMO2). The tract at residues 438 to 482 (IEDPAALNKPEKLKKKKKKSKMDRHGNDKSTPKKTCKKRQSSESD) is disordered. Basic residues predominate over residues 449-459 (KLKKKKKKSKM). Residues Ser478 and Ser485 each carry the phosphoserine modification. 2 stretches are compositionally biased toward basic and acidic residues: residues 499–508 (GIEKLGDTPR) and 536–552 (KKMSKEKSSDTTKESRP). Disordered stretches follow at residues 499–600 (GIEK…SDCH) and 635–677 (NVDR…KKTK). Lys573 is covalently cross-linked (Glycyl lysine isopeptide (Lys-Gly) (interchain with G-Cter in SUMO2)). Residues 661–670 (TFSQSGTSGS) are compositionally biased toward low complexity. A Glycyl lysine isopeptide (Lys-Gly) (interchain with G-Cter in SUMO2) cross-link involves residue Lys696. Residue Ser704 is modified to Phosphoserine. 3 disordered regions span residues 714-771 (PVPR…DKWS), 803-888 (IPSI…SSTP), and 912-941 (HRGQRSTPLTHDGQPKEMPQAPVLISCADQ). Polar residues predominate over residues 723-742 (GNVSSEPTKTSKGPFQSQKK). The segment covering 743 to 757 (NLFHKIVSKYKHKKE) has biased composition (basic residues). Positions 758–771 (KPNVPEKGSGDKWS) are enriched in basic and acidic residues. A compositionally biased stretch (polar residues) spans 805-817 (SIFNTPEPTTTQE). Residue Ser822 is modified to Phosphoserine. Residues 823-834 (QKRKARKTKITH) show a composition bias toward basic residues. The residue at position 844 (Ser844) is a Phosphoserine. Over residues 866-882 (TETDCNDKCSHNTEVGE) the composition is skewed to basic and acidic residues.

It is found in the nucleus. Transcription factor that is necessary for cell cycle progression from G1 to S phase. This is HMG box transcription factor BBX (BBX) from Homo sapiens (Human).